A 362-amino-acid chain; its full sequence is Talin rod domain-containing protein 1 (362 aa).

The segment at 1–27 is disordered; that stretch reads MASGSAGKPTGEAASPAPGSAVGGASS. At Ala-2 the chain carries N-acetylalanine. A compositionally biased stretch (low complexity) spans 9–27; that stretch reads PTGEAASPAPGSAVGGASS.

As to quaternary structure, may homodimerize. Interacts with F-actin. In terms of tissue distribution, ubiquitous.

Its function is as follows. Actin-binding protein which may have an oncogenic function and regulates cell proliferation, migration and invasion in cancer cells. This is Talin rod domain-containing protein 1 from Mus musculus (Mouse).